Consider the following 204-residue polypeptide: Large ribosomal subunit protein bL25 (204 aa).

The protein belongs to the bacterial ribosomal protein bL25 family. CTC subfamily. In terms of assembly, part of the 50S ribosomal subunit; part of the 5S rRNA/L5/L18/L25 subcomplex. Contacts the 5S rRNA. Binds to the 5S rRNA independently of L5 and L18.

Its function is as follows. This is one of the proteins that binds to the 5S RNA in the ribosome where it forms part of the central protuberance. In Pseudomonas syringae pv. syringae (strain B728a), this protein is Large ribosomal subunit protein bL25.